The following is a 458-amino-acid chain: tRNA modification GTPase MnmE (458 aa).

Arg-22, Glu-84, and Arg-123 together coordinate (6S)-5-formyl-5,6,7,8-tetrahydrofolate. Residues 220-379 form the TrmE-type G domain; it reads GIATAIIGRP…LETAIADLFF (160 aa). Asn-230 is a K(+) binding site. Residues 230–235, 249–255, and 274–277 contribute to the GTP site; these read NVGKSS, TDIAGTT, and DTAG. Ser-234 lines the Mg(2+) pocket. Positions 249, 251, and 254 each coordinate K(+). Residue Thr-255 participates in Mg(2+) binding. Residue Lys-458 participates in (6S)-5-formyl-5,6,7,8-tetrahydrofolate binding.

This sequence belongs to the TRAFAC class TrmE-Era-EngA-EngB-Septin-like GTPase superfamily. TrmE GTPase family. Homodimer. Heterotetramer of two MnmE and two MnmG subunits. K(+) serves as cofactor.

The protein resides in the cytoplasm. Exhibits a very high intrinsic GTPase hydrolysis rate. Involved in the addition of a carboxymethylaminomethyl (cmnm) group at the wobble position (U34) of certain tRNAs, forming tRNA-cmnm(5)s(2)U34. The polypeptide is tRNA modification GTPase MnmE (Bacillus cereus (strain ATCC 10987 / NRS 248)).